A 542-amino-acid chain; its full sequence is Protein OS-9 homolog (542 aa).

Positions 1-21 (MQAKIIYALSAISALIPLGSS) are cleaved as a signal peptide. Residues Asn52 and Asn74 are each glycosylated (N-linked (GlcNAc...) asparagine). Cystine bridges form between Cys70/Cys258, Cys117/Cys130, Cys193/Cys227, and Cys208/Cys239. Positions 115–241 (ERCIFYQAGF…QVTIPELCNL (127 aa)) constitute an MRH domain. Residues Trp125, Gln137, Asp194, Arg200, Glu223, and Tyr229 each coordinate a mannooligosaccharide derivative. Residue Asn380 is glycosylated (N-linked (GlcNAc...) asparagine). Residues 497–528 (NARMDDDESTSHTTRDIGEAGSQTTGNTESEV) form a disordered region. The segment covering 505–514 (STSHTTRDIG) has biased composition (basic and acidic residues). Residues 517 to 528 (GSQTTGNTESEV) show a composition bias toward polar residues. A Prevents secretion from ER motif is present at residues 539 to 542 (HDEL).

This sequence belongs to the OS-9 family. As to quaternary structure, homodimer. Component of the HRD1 ubiquitin ligase complex which contains the E3 ligase HRD1, its cofactors HRD3, USA1 and DER1, substrate recruiting factor YOS9 and CDC48-binding protein UBX2. Within the complex, interacts (via N-terminus) with HRD3. In ERAD-L, HRD3 and YOS9 jointly bind misfolded glycoproteins in the endoplasmic reticulum (ER) lumen. Movement of ERAD-L substrates through the ER membrane is facilitated by HRD1 and DER1 which have lateral gates facing each other and which distort the membrane region between the lateral gates, making it much thinner than a normal phospholipid bilayer. Substrates insert into the membrane as a hairpin loop with one strand interacting with DER1 and the other with HRD1. The HRD1 complex interacts with the heterotrimeric CDC48-NPL4-UFD1 ATPase complex which is recruited by UBX2 via its interaction with CDC48 and which moves ubiquitinated substrates to the cytosol for targeting to the proteasome. Interacts with KAR2 and EMP47. Interacts with misfolded ER lumenal proteins like PCR1. Interacts with the GPI-anchored proteins GAS1 and MKC7.

It localises to the endoplasmic reticulum membrane. Its function is as follows. Lectin involved in the quality control of the secretory pathway. As a member of the endoplasmic reticulum-associated degradation lumenal (ERAD-L) surveillance system, targets misfolded endoplasmic reticulum lumenal glycoproteins for degradation. The recognition of targets is N-glycan specific. Functions in recruiting misfolded protein substrates in conjunction with HRD3. The polypeptide is Protein OS-9 homolog (YOS9) (Saccharomyces cerevisiae (strain ATCC 204508 / S288c) (Baker's yeast)).